The chain runs to 152 residues: Small ribosomal subunit protein uS13 (152 aa).

The protein belongs to the universal ribosomal protein uS13 family. In terms of assembly, part of the 30S ribosomal subunit. Forms a loose heterodimer with protein S19. Forms two bridges to the 50S subunit in the 70S ribosome.

Located at the top of the head of the 30S subunit, it contacts several helices of the 16S rRNA. In the 70S ribosome it contacts the 23S rRNA (bridge B1a) and protein L5 of the 50S subunit (bridge B1b), connecting the 2 subunits; these bridges are implicated in subunit movement. In Pyrobaculum arsenaticum (strain DSM 13514 / JCM 11321 / PZ6), this protein is Small ribosomal subunit protein uS13.